The chain runs to 303 residues: ATP-dependent Clp protease ATP-binding subunit CLPT3, chloroplastic (303 aa).

The transit peptide at 1–37 (MLLANAPHNGCSRLQQVTLLRASGAKLHRKRALTVVA) directs the protein to the chloroplast. 2 disordered regions span residues 185 to 214 (ASTE…RDSD) and 278 to 303 (RDDN…DEYE).

The protein belongs to the ClpA/ClpB family.

It localises to the plastid. The protein localises to the chloroplast. Its function is as follows. Accessory protein regulating the assembly of the plastid Clp protease system. The chain is ATP-dependent Clp protease ATP-binding subunit CLPT3, chloroplastic from Chlamydomonas reinhardtii (Chlamydomonas smithii).